The sequence spans 332 residues: Casein kinase I isoform 2 (332 aa).

Residues 11 to 282 form the Protein kinase domain; it reads FRIGQKIGSG…YLKRLFRELF (272 aa). ATP is bound by residues 17-25 and lysine 40; that span reads IGSGSFGEI. Catalysis depends on aspartate 133, which acts as the Proton acceptor. The tract at residues 306 to 332 is disordered; it reads EGRADQQQQQQQQQQRRGSEKEDEHPV. The span at 311–320 shows a compositional bias: low complexity; the sequence is QQQQQQQQQQ. Basic and acidic residues predominate over residues 322–332; the sequence is RGSEKEDEHPV.

Belongs to the protein kinase superfamily. Ser/Thr protein kinase family. Requires Mg(2+) as cofactor.

The enzyme catalyses L-seryl-[protein] + ATP = O-phospho-L-seryl-[protein] + ADP + H(+). The catalysed reaction is L-threonyl-[protein] + ATP = O-phospho-L-threonyl-[protein] + ADP + H(+). Functionally, serine/threonine protein kinase. May phosphorylate ZC3H11 during unstressed conditions, leading to proteasome-dependent degradation of ZC3H11. The protein is Casein kinase I isoform 2 of Trypanosoma brucei brucei.